The chain runs to 357 residues: 3-dehydroquinate synthase (357 aa).

NAD(+) contacts are provided by residues 69–74 (DGEKNK), 103–107 (GVIGD), 127–128 (TT), Lys-140, and Lys-149. Positions 182, 245, and 262 each coordinate Zn(2+).

This sequence belongs to the sugar phosphate cyclases superfamily. Dehydroquinate synthase family. Co(2+) is required as a cofactor. The cofactor is Zn(2+). NAD(+) serves as cofactor.

The protein resides in the cytoplasm. The enzyme catalyses 7-phospho-2-dehydro-3-deoxy-D-arabino-heptonate = 3-dehydroquinate + phosphate. The protein operates within metabolic intermediate biosynthesis; chorismate biosynthesis; chorismate from D-erythrose 4-phosphate and phosphoenolpyruvate: step 2/7. In terms of biological role, catalyzes the conversion of 3-deoxy-D-arabino-heptulosonate 7-phosphate (DAHP) to dehydroquinate (DHQ). This chain is 3-dehydroquinate synthase, found in Shewanella denitrificans (strain OS217 / ATCC BAA-1090 / DSM 15013).